The following is a 71-amino-acid chain: Small ribosomal subunit protein bS21 (71 aa).

Positions 48 to 59 (EKASLAKRHAKR) are enriched in basic residues. Positions 48–71 (EKASLAKRHAKRNARENARNTRLY) are disordered. Basic and acidic residues predominate over residues 60 to 71 (NARENARNTRLY).

This sequence belongs to the bacterial ribosomal protein bS21 family.

The sequence is that of Small ribosomal subunit protein bS21 from Actinobacillus pleuropneumoniae serotype 5b (strain L20).